The chain runs to 1213 residues: A disintegrin and metalloproteinase with thrombospondin motifs 2 (1213 aa).

Positions 1 to 28 (MDPPAGAARRLLCPALLLLLLPPPPLLL) are cleaved as a signal peptide. Residues 29 to 260 (LPPPPASVRL…INSSRRRVRR (232 aa)) constitute a propeptide that is removed on maturation. N-linked (GlcNAc...) asparagine glycosylation is present at asparagine 111. The segment at 211-232 (YRRPPTPKPPPVSEPQALDTGV) is disordered. Pro residues predominate over residues 214–223 (PPTPKPPPVS). N-linked (GlcNAc...) asparagine glycosylation is present at asparagine 252. In terms of domain architecture, Peptidase M12B spans 267-471 (YNIEVLLGVD…HSYDCLRDDP (205 aa)). 10 disulfides stabilise this stretch: cysteine 344–cysteine 393, cysteine 387–cysteine 466, cysteine 426–cysteine 452, cysteine 493–cysteine 518, cysteine 504–cysteine 527, cysteine 513–cysteine 546, cysteine 540–cysteine 551, cysteine 574–cysteine 611, cysteine 578–cysteine 616, and cysteine 589–cysteine 601. Histidine 409 is a Zn(2+) binding site. Glutamate 410 is a catalytic residue. The Zn(2+) site is built by histidine 413 and histidine 419. The 81-residue stretch at 480–560 (PQLPGLHYSM…CIWLTPDILK (81 aa)) folds into the Disintegrin domain. The TSP type-1 1 domain occupies 561-617 (RDGNWGAWTPFGSCSRTCGTGVKFRTRQCDNPHPANGGRTCSGLAYDFQLCNPQDCP). A Cell attachment site motif is present at residues 692–694 (RGD). Residues 723-851 (CKVVKGTFTR…LNVDDNNVLE (129 aa)) are spacer. 3 consecutive TSP type-1 domains span residues 855-913 (VRHE…NPQE), 915-975 (SQPV…NREL), and 976-1030 (CPGR…APCP). Asparagine 949, asparagine 950, and asparagine 994 each carry an N-linked (GlcNAc...) asparagine glycan. 3 disulfide bridges follow: cysteine 988–cysteine 1024, cysteine 992–cysteine 1029, and cysteine 1003–cysteine 1013. Asparagine 1032 carries an N-linked (GlcNAc...) asparagine glycan. One can recognise a PLAC domain in the interval 1060–1098 (SKDQCQGDKSMFCRMEVLSRYCSIPSYNKLCCKSCNPPR). Residues asparagine 1099, asparagine 1147, and asparagine 1152 are each glycosylated (N-linked (GlcNAc...) asparagine).

As to quaternary structure, may belong to a multimeric complex. Binds specifically to collagen type XIV. Zn(2+) is required as a cofactor. In terms of processing, the precursor is cleaved by a furin endopeptidase. Glycosylated. Can be O-fucosylated by POFUT2 on a serine or a threonine residue found within the consensus sequence C1-X(2)-(S/T)-C2-G of the TSP type-1 repeat domains where C1 and C2 are the first and second cysteine residue of the repeat, respectively. Fucosylated repeats can then be further glycosylated by the addition of a beta-1,3-glucose residue by the glucosyltransferase, B3GALTL. Fucosylation mediates the efficient secretion of ADAMTS family members. Can also be C-glycosylated with one or two mannose molecules on tryptophan residues within the consensus sequence W-X-X-W of the TPRs, and N-glycosylated. These other glycosylations can also facilitate secretion.

The protein resides in the secreted. Its subcellular location is the extracellular space. It is found in the extracellular matrix. It catalyses the reaction Cleaves the N-propeptide of collagen chain alpha1(I) at Pro-|-Gln and of alpha1(II) and alpha2(I) at Ala-|-Gln.. Functionally, cleaves the propeptides of type I and II collagen prior to fibril assembly. Does not act on type III collagen. Cleaves lysyl oxidase LOX at a site downstream of its propeptide cleavage site to produce a short LOX form with reduced collagen-binding activity. In Mus musculus (Mouse), this protein is A disintegrin and metalloproteinase with thrombospondin motifs 2 (Adamts2).